The chain runs to 117 residues: Ribosome-binding factor A (117 aa).

Belongs to the RbfA family. As to quaternary structure, monomer. Binds 30S ribosomal subunits, but not 50S ribosomal subunits or 70S ribosomes.

Its subcellular location is the cytoplasm. In terms of biological role, one of several proteins that assist in the late maturation steps of the functional core of the 30S ribosomal subunit. Associates with free 30S ribosomal subunits (but not with 30S subunits that are part of 70S ribosomes or polysomes). Required for efficient processing of 16S rRNA. May interact with the 5'-terminal helix region of 16S rRNA. This is Ribosome-binding factor A from Syntrophobacter fumaroxidans (strain DSM 10017 / MPOB).